The following is a 695-amino-acid chain: Follicle-stimulating hormone receptor (695 aa).

The N-terminal stretch at 1-17 (MALLLVSLLAFLSLGSG) is a signal peptide. Cystine bridges form between cysteine 18/cysteine 25 and cysteine 23/cysteine 32. Residues 18–46 (CHHRICHCSNRVFLCQESKVTEIPSDLPR) form the LRRNT domain. Over 18–366 (CHHRICHCSN…EDIMGYNILR (349 aa)) the chain is Extracellular. 9 LRR repeats span residues 49 to 72 (IELRFVLTKLRVIQKGAFSGFGDL), 73 to 97 (EKIEISQNDVLEVIEADVFSNLPKL), 98 to 118 (HEIRIEKANNLLYINPEAFQN), 119 to 143 (LPNLQYLLISNTGIKHLPDVHKIHS), 144 to 169 (LQKVLLDIQDNINIHTIERNSFVGLS), 170 to 192 (FESVILWLNKNGIQEIHNCAFNG), 193 to 216 (TQLDELNLSDNNNLEELPNDVFHG), 217 to 240 (ASGPVILDISRTRIHSLPSYGLEN), and 241 to 259 (LKKLRARSTYNLKKLPTLE). N-linked (GlcNAc...) asparagine glycans are attached at residues asparagine 191 and asparagine 199. Disulfide bonds link cysteine 275–cysteine 346, cysteine 276–cysteine 292, cysteine 276–cysteine 356, and cysteine 292–cysteine 338. Residues asparagine 293 and asparagine 318 are each glycosylated (N-linked (GlcNAc...) asparagine). Tyrosine 335 carries the post-translational modification Sulfotyrosine. Residues 367-387 (VLIWFISILAITGNIIVLVIL) form a helical membrane-spanning segment. The Cytoplasmic segment spans residues 388–398 (TTSQYKLTVPR). Residues 399–421 (FLMCNLAFADLCIGIYLLLIASV) form a helical membrane-spanning segment. At 422 to 443 (DIHTKSQYHNYAIDWQTGAGCD) the chain is on the extracellular side. Cysteine 442 and cysteine 517 are joined by a disulfide. A helical transmembrane segment spans residues 444–465 (AAGFFTVFASELSVYTLTAITL). Topologically, residues 466 to 485 (ERWHTITHAMQLDCKVQLRH) are cytoplasmic. A helical membrane pass occupies residues 486–508 (AASVMVMGWIFAFAAALFPIFGI). The Extracellular portion of the chain corresponds to 509-528 (SSYMKVSICLPMDIDSPLSQ). Residues 529-550 (LYVMSLLVLNVLAFVVICGCYI) traverse the membrane as a helical segment. Residues 551 to 573 (HIYLTVRNPNIVSSSSDTRIAKR) lie on the Cytoplasmic side of the membrane. A helical membrane pass occupies residues 574–597 (MAMLIFTDFLCMAPISFFAISASL). The Extracellular segment spans residues 598–608 (KVPLITVSKAK). Residues 609–630 (ILLVLFHPINSCANPFLYAIFT) form a helical membrane-spanning segment. Over 631 to 695 (KNFRRDFFIL…LVPLSHLAQN (65 aa)) the chain is Cytoplasmic.

This sequence belongs to the G-protein coupled receptor 1 family. FSH/LSH/TSH subfamily. As to quaternary structure, homotrimer. Functions as a homotrimer binding the FSH hormone heterodimer composed of CGA and FSHB. Interacts with ARRB2. Interacts with APPL2; interaction is independent of follicle stimulating hormone stimulation. In terms of processing, sulfated. Post-translationally, N-glycosylated; indirectly required for FSH-binding, possibly via a conformational change that allows high affinity binding of hormone. As to expression, sertoli cells and ovarian granulosa cells.

The protein localises to the cell membrane. G protein-coupled receptor for follitropin, the follicle-stimulating hormone. Through cAMP production activates the downstream PI3K-AKT and ERK1/ERK2 signaling pathways. The protein is Follicle-stimulating hormone receptor (FSHR) of Homo sapiens (Human).